Here is a 348-residue protein sequence, read N- to C-terminus: Protein RecA (348 aa).

Residue 67–74 (GPESSGKT) participates in ATP binding.

Belongs to the RecA family.

The protein resides in the cytoplasm. Functionally, can catalyze the hydrolysis of ATP in the presence of single-stranded DNA, the ATP-dependent uptake of single-stranded DNA by duplex DNA, and the ATP-dependent hybridization of homologous single-stranded DNAs. It interacts with LexA causing its activation and leading to its autocatalytic cleavage. The sequence is that of Protein RecA from Kineococcus radiotolerans (strain ATCC BAA-149 / DSM 14245 / SRS30216).